The primary structure comprises 108 residues: Pyrimidine/purine nucleoside phosphorylase (108 aa).

This sequence belongs to the nucleoside phosphorylase PpnP family.

The catalysed reaction is a purine D-ribonucleoside + phosphate = a purine nucleobase + alpha-D-ribose 1-phosphate. It carries out the reaction adenosine + phosphate = alpha-D-ribose 1-phosphate + adenine. It catalyses the reaction cytidine + phosphate = cytosine + alpha-D-ribose 1-phosphate. The enzyme catalyses guanosine + phosphate = alpha-D-ribose 1-phosphate + guanine. The catalysed reaction is inosine + phosphate = alpha-D-ribose 1-phosphate + hypoxanthine. It carries out the reaction thymidine + phosphate = 2-deoxy-alpha-D-ribose 1-phosphate + thymine. It catalyses the reaction uridine + phosphate = alpha-D-ribose 1-phosphate + uracil. The enzyme catalyses xanthosine + phosphate = alpha-D-ribose 1-phosphate + xanthine. Catalyzes the phosphorolysis of diverse nucleosides, yielding D-ribose 1-phosphate and the respective free bases. Can use uridine, adenosine, guanosine, cytidine, thymidine, inosine and xanthosine as substrates. Also catalyzes the reverse reactions. This chain is Pyrimidine/purine nucleoside phosphorylase, found in Acinetobacter baylyi (strain ATCC 33305 / BD413 / ADP1).